Here is a 755-residue protein sequence, read N- to C-terminus: Histone-lysine N-methyltransferase, H3 lysine-9 specific SUVH8 (755 aa).

2 disordered regions span residues 62 to 98 and 111 to 243; these read YDRDAGPSTGPVHRERSDAVNEEAHATSIPPHAPPQT and YDRD…KMVI. 2 stretches are compositionally biased toward basic and acidic residues: residues 73-86 and 122-135; these read VHRERSDAVNEEAH and IDREASHEVNEDAH. The a.T hook DNA-binding region spans 174–186; the sequence is KRGRGRPKGSKNG. A compositionally biased stretch (basic residues) spans 174-193; that stretch reads KRGRGRPKGSKNGSRKPKKP. The span at 197–207 shows a compositional bias: polar residues; that stretch reads DNNSTDASAGP. Basic residues predominate over residues 212 to 231; it reads GKRRCGRPKGLKNRSRKPKK. In terms of domain architecture, YDG spans 310–448; it reads GPIPGVQVGD…FKEYRFKLLR (139 aa). Residues 528–578 enclose the Pre-SET domain; it reads QSLVQSYIHQNCTCILKNCGQLPYHDNILVCRKPLIYECGGSCPTRMVETG. Residues 581–723 form the SET domain; that stretch reads LHLEVFKTSN…PMTELTYDYG (143 aa). S-adenosyl-L-methionine contacts are provided by residues 591-593, aspartate 624, tyrosine 626, arginine 676, and 679-680; these read CGW and NH. Cysteine 682, cysteine 743, cysteine 745, and cysteine 750 together coordinate Zn(2+). In terms of domain architecture, Post-SET spans 739–755; it reads GKKICLCGSVKCRGSFG.

Belongs to the class V-like SAM-binding methyltransferase superfamily. Histone-lysine methyltransferase family. Suvar3-9 subfamily.

Its subcellular location is the nucleus. It is found in the chromosome. The protein localises to the centromere. The catalysed reaction is N(6)-methyl-L-lysyl(9)-[histone H3] + S-adenosyl-L-methionine = N(6),N(6)-dimethyl-L-lysyl(9)-[histone H3] + S-adenosyl-L-homocysteine + H(+). It carries out the reaction L-lysyl(9)-[histone H3] + S-adenosyl-L-methionine = N(6)-methyl-L-lysyl(9)-[histone H3] + S-adenosyl-L-homocysteine + H(+). Its function is as follows. Histone methyltransferase. Methylates 'Lys-9' of histone H3. H3 'Lys-9' methylation represents a specific tag for epigenetic transcriptional repression. The protein is Histone-lysine N-methyltransferase, H3 lysine-9 specific SUVH8 (SUVH8) of Arabidopsis thaliana (Mouse-ear cress).